Here is a 574-residue protein sequence, read N- to C-terminus: Proline--tRNA ligase (574 aa).

The protein belongs to the class-II aminoacyl-tRNA synthetase family. ProS type 1 subfamily. Homodimer.

The protein resides in the cytoplasm. The enzyme catalyses tRNA(Pro) + L-proline + ATP = L-prolyl-tRNA(Pro) + AMP + diphosphate. In terms of biological role, catalyzes the attachment of proline to tRNA(Pro) in a two-step reaction: proline is first activated by ATP to form Pro-AMP and then transferred to the acceptor end of tRNA(Pro). As ProRS can inadvertently accommodate and process non-cognate amino acids such as alanine and cysteine, to avoid such errors it has two additional distinct editing activities against alanine. One activity is designated as 'pretransfer' editing and involves the tRNA(Pro)-independent hydrolysis of activated Ala-AMP. The other activity is designated 'posttransfer' editing and involves deacylation of mischarged Ala-tRNA(Pro). The misacylated Cys-tRNA(Pro) is not edited by ProRS. The polypeptide is Proline--tRNA ligase (Desulfovibrio desulfuricans (strain ATCC 27774 / DSM 6949 / MB)).